We begin with the raw amino-acid sequence, 296 residues long: uncharacterized protein (296 aa).

The region spanning 1-95 is the FAD-binding FR-type domain; sequence MYKIVSKKEL…VGPLGVPSEF (95 aa).

This is an uncharacterized protein from Clostridium beijerinckii (Clostridium MP).